Reading from the N-terminus, the 541-residue chain is Formimidoyltransferase-cyclodeaminase (541 aa).

Residues 1-181 (MSQLVECVPN…GATVTGARKF (181 aa)) form a formiminotransferase N-subdomain region. H82 acts as the For formimidoyltransferase activity in catalysis. 163-172 (GPSSFVPSWG) provides a ligand contact to folate. A formiminotransferase C-subdomain region spans residues 182-326 (LIAFNINLLS…PKERIIEYLV (145 aa)). The segment at 327-334 (PDSGPEQS) is linker. A cyclodeaminase/cyclohydrolase region spans residues 335 to 541 (LLDASLRAFV…VLGSLEARKE (207 aa)). The For cyclodeaminase activity role is filled by D412. S520 is subject to Phosphoserine.

The protein in the C-terminal section; belongs to the cyclodeaminase/cyclohydrolase family. In the N-terminal section; belongs to the formiminotransferase family. As to quaternary structure, homooctamer, including four polyglutamate binding sites. The subunits are arranged as a tetramer of dimers, and form a planar ring-shaped structure. Specifically expressed in liver (at protein level).

Its subcellular location is the cytoplasm. It localises to the cytosol. It is found in the golgi apparatus. The protein localises to the cytoskeleton. The protein resides in the microtubule organizing center. Its subcellular location is the centrosome. It localises to the centriole. It catalyses the reaction 5-formimidoyltetrahydrofolate + L-glutamate = N-formimidoyl-L-glutamate + (6S)-5,6,7,8-tetrahydrofolate. The enzyme catalyses 5-formimidoyltetrahydrofolate + 2 H(+) = (6R)-5,10-methenyltetrahydrofolate + NH4(+). It participates in amino-acid degradation; L-histidine degradation into L-glutamate; L-glutamate from N-formimidoyl-L-glutamate (transferase route): step 1/1. In terms of biological role, folate-dependent enzyme, that displays both transferase and deaminase activity. Serves to channel one-carbon units from formiminoglutamate to the folate pool. Its function is as follows. Binds and promotes bundling of vimentin filaments originating from the Golgi. The sequence is that of Formimidoyltransferase-cyclodeaminase (Ftcd) from Rattus norvegicus (Rat).